A 239-amino-acid polypeptide reads, in one-letter code: Tumor necrosis factor ligand superfamily member 14 (239 aa).

Residues 1-37 (MESVVQPSVFVVDGQTDIPFRRLEQNHRRRRCGTVQV) are Cytoplasmic-facing. The chain crosses the membrane as a helical; Signal-anchor for type II membrane protein span at residues 38–58 (SLALVLLLGAGLATQGWFLLR). The Extracellular portion of the chain corresponds to 59-239 (LHQRLGDIVA…TRSYFGAFMV (181 aa)). The 148-residue stretch at 92–239 (PAAHLTGANA…TRSYFGAFMV (148 aa)) folds into the THD domain. N-linked (GlcNAc...) asparagine glycosylation is present at asparagine 100. A disulfide bridge connects residues cysteine 152 and cysteine 187. A glycan (N-linked (GlcNAc...) asparagine) is linked at asparagine 191.

This sequence belongs to the tumor necrosis factor family. In terms of assembly, homotrimer. Interacts with TNFRSF14. In terms of processing, the soluble form derives from the membrane form by proteolytic processing.

Its subcellular location is the cell membrane. The protein resides in the secreted. Cytokine that binds to TNFRSF3/LTBR. Binding to the decoy receptor TNFRSF6B modulates its effects. Activates NFKB and stimulates the proliferation of T-cells. Acts as a ligand for TNFRSF14/HVEM. Upon binding to TNFRSF14/HVEM, delivers costimulatory signals to T cells, leading to T cell proliferation and IFNG production. The sequence is that of Tumor necrosis factor ligand superfamily member 14 (Tnfsf14) from Mus musculus (Mouse).